Reading from the N-terminus, the 298-residue chain is Single myb histone 2 (298 aa).

In terms of domain architecture, HTH myb-type spans 1 to 61 (MGVPKQRWTP…KWRNLSVTAG (61 aa)). Residues 28–57 (WRTILRDSDFSALLRLRSNVDLKDKWRNLS) constitute a DNA-binding region (H-T-H motif). An H15 domain is found at 124 to 192 (SVARLDDLIV…KVNQKYRIAP (69 aa)). A coiled-coil region spans residues 237–278 (EEAAAFAAKAVAEAEVAMAEAEEAARVAEAAENDAEAAKAFL).

It belongs to the histone H1/H5 family. SMH subfamily. Forms a homodimer and heterodimers.

Its subcellular location is the nucleus. It localises to the chromosome. The protein localises to the nucleolus. It is found in the telomere. In terms of biological role, binds preferentially double-stranded telomeric repeats, but may also bind to the single telomeric strand. This chain is Single myb histone 2 (SMH2), found in Zea mays (Maize).